Consider the following 203-residue polypeptide: Mitotic spindle assembly checkpoint protein MAD2A (203 aa).

The HORMA domain occupies 14-196 (KGSTEIVTEF…TTIHKVESMV (183 aa)). Positions 194-203 (SMVAYKISND) are required for assuming the closed conformation and for interaction with cdc20.

This sequence belongs to the MAD2 family. As to quaternary structure, interacts with cdc20.

It is found in the nucleus. Its subcellular location is the chromosome. The protein resides in the centromere. It localises to the kinetochore. The protein localises to the cytoplasm. Component of the spindle-assembly checkpoint that prevents the onset of anaphase until all chromosomes are properly aligned at the metaphase plate. Required for the execution of the mitotic checkpoint which monitors the process of kinetochore-spindle attachment and inhibits the activity of the anaphase promoting complex until all chromosomes are aligned at the metaphase plate. This chain is Mitotic spindle assembly checkpoint protein MAD2A (mad2l1-1), found in Dictyostelium discoideum (Social amoeba).